Here is a 337-residue protein sequence, read N- to C-terminus: UbiA prenyltransferase domain-containing protein 1 (337 aa).

At Ala2 the chain carries N-acetylalanine. Transmembrane regions (helical) follow at residues Leu82 to Thr102, Phe133 to Pro153, Leu159 to Phe179, Leu187 to Gly207, Ser208 to Leu228, Ile244 to Leu266, Thr276 to Glu296, and Leu314 to Leu334.

It belongs to the UbiA prenyltransferase family. As to quaternary structure, interacts with HMGCR and SOAT1.

The protein localises to the endoplasmic reticulum membrane. The protein resides in the golgi apparatus membrane. It is found in the mitochondrion membrane. The catalysed reaction is menadiol + (2E,6E,10E)-geranylgeranyl diphosphate = menaquinol-4 + diphosphate. It catalyses the reaction all-trans-decaprenyl diphosphate + 4-hydroxybenzoate = 4-hydroxy-3-(all-trans-decaprenyl)benzoate + diphosphate. The protein operates within quinol/quinone metabolism; menaquinone biosynthesis. It functions in the pathway cofactor biosynthesis; ubiquinone biosynthesis. Functionally, prenyltransferase that mediates the formation of menaquinone-4 (MK-4) and coenzyme Q10. MK-4 is a vitamin K2 isoform required for endothelial cell development. Mediates the conversion of phylloquinone (PK) into MK-4, probably by cleaving the side chain of phylloquinone (PK) to release 2-methyl-1,4-naphthoquinone (menadione; K3) and then prenylating it with geranylgeranyl pyrophosphate (GGPP) to form MK-4. Also plays a role in cardiovascular development independently of MK-4 biosynthesis, by acting as a coenzyme Q10 biosynthetic enzyme: coenzyme Q10, also named ubiquinone, plays an important antioxidant role in the cardiovascular system. Mediates biosynthesis of coenzyme Q10 in the Golgi membrane, leading to protect cardiovascular tissues from NOS3/eNOS-dependent oxidative stress. In Ailuropoda melanoleuca (Giant panda), this protein is UbiA prenyltransferase domain-containing protein 1 (UBIAD1).